The chain runs to 390 residues: Magnesium-protoporphyrin IX monomethyl ester [oxidative] cyclase (390 aa).

Belongs to the AcsF family. It depends on Fe cation as a cofactor.

It catalyses the reaction Mg-protoporphyrin IX 13-monomethyl ester + 3 NADPH + 3 O2 + 2 H(+) = 3,8-divinyl protochlorophyllide a + 3 NADP(+) + 5 H2O. Its pathway is porphyrin-containing compound metabolism; chlorophyll biosynthesis (light-independent). Functionally, catalyzes the formation of the isocyclic ring in chlorophyll biosynthesis. Mediates the cyclase reaction, which results in the formation of divinylprotochlorophyllide (Pchlide) characteristic of all chlorophylls from magnesium-protoporphyrin IX 13-monomethyl ester (MgPMME). The polypeptide is Magnesium-protoporphyrin IX monomethyl ester [oxidative] cyclase (Prochlorococcus marinus (strain MIT 9312)).